The sequence spans 854 residues: DNA gyrase subunit A (854 aa).

Residues 42–510 form the Topo IIA-type catalytic domain; the sequence is LPEVRDGLKP…ADGQVSDEDL (469 aa). The O-(5'-phospho-DNA)-tyrosine intermediate role is filled by Y129. A GyrA-box motif is present at residues 537–543; it reads QKRGGKG.

The protein belongs to the type II topoisomerase GyrA/ParC subunit family. In terms of assembly, heterotetramer, composed of two GyrA and two GyrB chains. In the heterotetramer, GyrA contains the active site tyrosine that forms a transient covalent intermediate with DNA, while GyrB binds cofactors and catalyzes ATP hydrolysis.

It is found in the cytoplasm. It catalyses the reaction ATP-dependent breakage, passage and rejoining of double-stranded DNA.. With respect to regulation, DNA supercoiling is inhibited by the coumarin antibiotic novobiocin. Also inhibited by the fluoroquinolones ciprofloxacin and moxifloxacin. In terms of biological role, a type II topoisomerase that negatively supercoils closed circular double-stranded (ds) DNA in an ATP-dependent manner to modulate DNA topology and maintain chromosomes in an underwound state; also catalyzes the interconversion of other topological isomers of double-stranded DNA rings, including catenanes. At comparable concentrations has a stronger decatenation activity than E.coli, which is inhibited by ciprofloxacin and novobiocin. Cleaves dsDNA at the sequence 5'-AT/GGCC-3', leaving a 4 base overhang. Relaxes negatively supercoiled DNA in an ATP-independent manner. Its function is as follows. Negative supercoiling favors strand separation, and DNA replication, transcription, recombination and repair, all of which involve strand separation. Type II topoisomerases break and join 2 DNA strands simultaneously in an ATP-dependent manner. In Mycolicibacterium smegmatis (Mycobacterium smegmatis), this protein is DNA gyrase subunit A.